Reading from the N-terminus, the 150-residue chain is Catabolic 3-dehydroquinase 2 (150 aa).

Tyr23 serves as the catalytic Proton acceptor. Asn74, His80, and Asp87 together coordinate substrate. The Proton donor role is filled by His100. Substrate contacts are provided by residues 101–102 and Arg111; that span reads IT.

Belongs to the type-II 3-dehydroquinase family. In terms of assembly, homododecamer. Adopts a ring-like structure, composed of an arrangement of two hexameric rings stacked on top of one another.

The enzyme catalyses 3-dehydroquinate = 3-dehydroshikimate + H2O. It functions in the pathway aromatic compound metabolism; 3,4-dihydroxybenzoate biosynthesis; 3,4-dihydroxybenzoate from 3-dehydroquinate: step 1/2. In terms of biological role, is involved in the catabolism of quinate. Allows the utilization of quinate as carbon source via the beta-ketoadipate pathway. This Aspergillus flavus (strain ATCC 200026 / FGSC A1120 / IAM 13836 / NRRL 3357 / JCM 12722 / SRRC 167) protein is Catabolic 3-dehydroquinase 2.